Reading from the N-terminus, the 236-residue chain is MAPSFADVIAVVPAAGIGSRMQTECPKQYLTIGNQTILEHAVAPLLQHPRISRVIIAISPADTAFARLPLAAHPDIQVVRGGAQRADSVLAGLQAAGDARWALVHDAARPCLSAQDLERLLALTETSQVGGILAAPACDTMKRAEPGKPAIAHTVDRENLWHALTPQLFPLELLRDCLTRALAEGATITDEASALEHCGFHPELVAGRADNIKVTRPEDLALAAFYLTRLTPMETA.

The protein belongs to the IspD/TarI cytidylyltransferase family. IspD subfamily. In terms of assembly, homodimer.

It carries out the reaction 2-C-methyl-D-erythritol 4-phosphate + CTP + H(+) = 4-CDP-2-C-methyl-D-erythritol + diphosphate. Its pathway is isoprenoid biosynthesis; isopentenyl diphosphate biosynthesis via DXP pathway; isopentenyl diphosphate from 1-deoxy-D-xylulose 5-phosphate: step 2/6. Functionally, catalyzes the formation of 4-diphosphocytidyl-2-C-methyl-D-erythritol from CTP and 2-C-methyl-D-erythritol 4-phosphate (MEP). The sequence is that of 2-C-methyl-D-erythritol 4-phosphate cytidylyltransferase from Cronobacter sakazakii (strain ATCC BAA-894) (Enterobacter sakazakii).